A 129-amino-acid chain; its full sequence is Phosphoribosyl-AMP cyclohydrolase (129 aa).

Aspartate 85 provides a ligand contact to Mg(2+). A Zn(2+)-binding site is contributed by cysteine 86. Residues aspartate 87 and aspartate 89 each coordinate Mg(2+). Cysteine 102 and cysteine 109 together coordinate Zn(2+).

The protein belongs to the PRA-CH family. In terms of assembly, homodimer. Mg(2+) is required as a cofactor. Zn(2+) serves as cofactor.

It is found in the cytoplasm. The enzyme catalyses 1-(5-phospho-beta-D-ribosyl)-5'-AMP + H2O = 1-(5-phospho-beta-D-ribosyl)-5-[(5-phospho-beta-D-ribosylamino)methylideneamino]imidazole-4-carboxamide. Its pathway is amino-acid biosynthesis; L-histidine biosynthesis; L-histidine from 5-phospho-alpha-D-ribose 1-diphosphate: step 3/9. Catalyzes the hydrolysis of the adenine ring of phosphoribosyl-AMP. The polypeptide is Phosphoribosyl-AMP cyclohydrolase (Methanococcus maripaludis (strain C6 / ATCC BAA-1332)).